The following is a 108-amino-acid chain: Nucleoid-associated protein CHAB381_0200 (108 aa).

Belongs to the YbaB/EbfC family. Homodimer.

It is found in the cytoplasm. It localises to the nucleoid. Binds to DNA and alters its conformation. May be involved in regulation of gene expression, nucleoid organization and DNA protection. The protein is Nucleoid-associated protein CHAB381_0200 of Campylobacter hominis (strain ATCC BAA-381 / DSM 21671 / CCUG 45161 / LMG 19568 / NCTC 13146 / CH001A).